The following is a 433-amino-acid chain: Enolase (433 aa).

A (2R)-2-phosphoglycerate-binding site is contributed by Gln167. The Proton donor role is filled by Glu209. Residues Asp246, Glu291, and Asp318 each contribute to the Mg(2+) site. Positions 343, 372, 373, and 394 each coordinate (2R)-2-phosphoglycerate. The Proton acceptor role is filled by Lys343.

Belongs to the enolase family. As to quaternary structure, component of the RNA degradosome, a multiprotein complex involved in RNA processing and mRNA degradation. It depends on Mg(2+) as a cofactor.

The protein resides in the cytoplasm. It is found in the secreted. It localises to the cell surface. It carries out the reaction (2R)-2-phosphoglycerate = phosphoenolpyruvate + H2O. The protein operates within carbohydrate degradation; glycolysis; pyruvate from D-glyceraldehyde 3-phosphate: step 4/5. Catalyzes the reversible conversion of 2-phosphoglycerate (2-PG) into phosphoenolpyruvate (PEP). It is essential for the degradation of carbohydrates via glycolysis. This is Enolase from Actinobacillus succinogenes (strain ATCC 55618 / DSM 22257 / CCUG 43843 / 130Z).